Here is a 115-residue protein sequence, read N- to C-terminus: NADH-ubiquinone oxidoreductase chain 3 (115 aa).

Transmembrane regions (helical) follow at residues 3–23 (LVIA…VAFW), 55–75 (FFLV…LLPI), and 87–107 (LLSL…YEWL).

Belongs to the complex I subunit 3 family. Core subunit of respiratory chain NADH dehydrogenase (Complex I) which is composed of 45 different subunits. Interacts with TMEM186. Interacts with TMEM242.

It localises to the mitochondrion inner membrane. It catalyses the reaction a ubiquinone + NADH + 5 H(+)(in) = a ubiquinol + NAD(+) + 4 H(+)(out). Its function is as follows. Core subunit of the mitochondrial membrane respiratory chain NADH dehydrogenase (Complex I) which catalyzes electron transfer from NADH through the respiratory chain, using ubiquinone as an electron acceptor. Essential for the catalytic activity of complex I. The sequence is that of NADH-ubiquinone oxidoreductase chain 3 from Ornithorhynchus anatinus (Duckbill platypus).